We begin with the raw amino-acid sequence, 578 residues long: Membrane protein insertase YidC (578 aa).

The helical transmembrane segment at 3–23 (IQRSILIVALAVVSYLLVLQW) threads the bilayer. Residues 34–71 (AASASMNTTQGLPDTPSAAGTSSDVPTAQSGAAGSEAA) are disordered. Residues 37-65 (ASMNTTQGLPDTPSAAGTSSDVPTAQSGA) are compositionally biased toward polar residues. 5 helical membrane-spanning segments follow: residues 361–381 (LELT…FWLL), 387–407 (LIGN…LAFF), 457–477 (LGGC…YWVL), 500–520 (PFFI…MLNP), and 535–555 (PIIF…YWVV).

This sequence belongs to the OXA1/ALB3/YidC family. Type 1 subfamily. Interacts with the Sec translocase complex via SecD. Specifically interacts with transmembrane segments of nascent integral membrane proteins during membrane integration.

The protein resides in the cell inner membrane. In terms of biological role, required for the insertion and/or proper folding and/or complex formation of integral membrane proteins into the membrane. Involved in integration of membrane proteins that insert both dependently and independently of the Sec translocase complex, as well as at least some lipoproteins. Aids folding of multispanning membrane proteins. The polypeptide is Membrane protein insertase YidC (Pseudomonas paraeruginosa (strain DSM 24068 / PA7) (Pseudomonas aeruginosa (strain PA7))).